A 250-amino-acid chain; its full sequence is AA9 family lytic polysaccharide monooxygenase B (250 aa).

A signal peptide spans 1–21 (MTLSKITSIAGLLASASLVAG). The Cu(2+) site is built by H22 and H107. H22 is modified (methylhistidine). 2 disulfide bridges follow: C77-C199 and C118-C122. Residue N159 is glycosylated (N-linked (GlcNAc...) asparagine). O2 contacts are provided by H185 and Q194. Cu(2+) is bound at residue Y196.

The protein belongs to the polysaccharide monooxygenase AA9 family. Cu(2+) is required as a cofactor. In terms of processing, the catalytically essential N-terminal histidine His-22 is post-translationally modified by methylation to prevent protonation of the histidine side chain, and protect the critical active site of the enzyme from oxidative damage.

It localises to the secreted. It carries out the reaction [(1-&gt;4)-beta-D-glucosyl]n+m + reduced acceptor + O2 = 4-dehydro-beta-D-glucosyl-[(1-&gt;4)-beta-D-glucosyl]n-1 + [(1-&gt;4)-beta-D-glucosyl]m + acceptor + H2O.. Its function is as follows. Lytic polysaccharide monooxygenase (LPMO) that depolymerizes crystalline and amorphous polysaccharides via the oxidation of scissile alpha- or beta-(1-4)-glycosidic bonds, yielding C1 and C4 oxidation products. Catalysis by LPMOs requires the reduction of the active-site copper from Cu(II) to Cu(I) by a reducing agent and H(2)O(2) or O(2) as a cosubstrate. Shows activity on phosphoric acid swollen cellulose, on NaOH pretreated soy spent flakes as well as on crystalline cellulose (Avicel). Does not have a positive effect on cel6A activity, but acts synergistically with endoglucanase egl7. In Aspergillus fumigatus (strain ATCC MYA-4609 / CBS 101355 / FGSC A1100 / Af293) (Neosartorya fumigata), this protein is AA9 family lytic polysaccharide monooxygenase B.